Consider the following 396-residue polypeptide: Tryptophan synthase beta chain (396 aa).

The residue at position 88 (Lys-88) is an N6-(pyridoxal phosphate)lysine.

The protein belongs to the TrpB family. Tetramer of two alpha and two beta chains. It depends on pyridoxal 5'-phosphate as a cofactor.

The catalysed reaction is (1S,2R)-1-C-(indol-3-yl)glycerol 3-phosphate + L-serine = D-glyceraldehyde 3-phosphate + L-tryptophan + H2O. It participates in amino-acid biosynthesis; L-tryptophan biosynthesis; L-tryptophan from chorismate: step 5/5. Functionally, the beta subunit is responsible for the synthesis of L-tryptophan from indole and L-serine. The sequence is that of Tryptophan synthase beta chain from Shewanella baltica (strain OS185).